A 488-amino-acid polypeptide reads, in one-letter code: Glutamate--tRNA ligase (488 aa).

Positions 16–26 (PSPTGEPHVGT) match the 'HIGH' region motif. A 'KMSKS' region motif is present at residues 257–261 (KLSKR). Residue Lys-260 coordinates ATP.

The protein belongs to the class-I aminoacyl-tRNA synthetase family. Glutamate--tRNA ligase type 1 subfamily. In terms of assembly, monomer.

Its subcellular location is the cytoplasm. The enzyme catalyses tRNA(Glu) + L-glutamate + ATP = L-glutamyl-tRNA(Glu) + AMP + diphosphate. Functionally, catalyzes the attachment of glutamate to tRNA(Glu) in a two-step reaction: glutamate is first activated by ATP to form Glu-AMP and then transferred to the acceptor end of tRNA(Glu). This is Glutamate--tRNA ligase from Rhizobium johnstonii (strain DSM 114642 / LMG 32736 / 3841) (Rhizobium leguminosarum bv. viciae).